A 20-amino-acid chain; its full sequence is SVFAFENEQSSTIAPARLYK.

The tract at residues 1–20 is disordered; it reads SVFAFENEQSSTIAPARLYK.

It belongs to the BetVI family.

The chain is Protein PR-L2 from Lupinus luteus (European yellow lupine).